The sequence spans 471 residues: MAREMTILGSAVLTLLLAGYLAQQYLPLPTPKVIGIDLGTTYCSVGVFFPGTGKVKVIPDENGHISIPSMVSFTDNDVYVGYESVELADSNPQNTIYDAKRFIGKIFTPEELEAEIGRYPFKVLNKNGMVEFSVTSNETITVSPEYVGSRLLLKLKEMAEAYLGMPVANAVISVPAEFDLKQRNSTIEAANLAGLKILRVINEPTAAAMAYGLHKADVFHVLVIDLGGGTLDVSLLNKQGGMFLTRAMSGNNKLGGQDFNQRLLQYLYKQIYQTYGFVPSRKEEIHRLRQSVEMVKLNLTLHQSAQLSALLTVEEQDRKEPHSSDTELPKDKLSSADDHRVNSGFGRGLSDKKSGESQVLFETEISRKLFDTLNEDLFQKILVPIQQVLKEGHLEKTEIDEVVLVGGSTRIPRIRQVIQEFFGKDPNTSVDPDLAVVTGVAIQAGIDGGSWPLQVSALEIPNKHLQKTNFN.

A signal peptide spans 1–22; that stretch reads MAREMTILGSAVLTLLLAGYLA. Residues 314–352 are disordered; it reads EEQDRKEPHSSDTELPKDKLSSADDHRVNSGFGRGLSDK. Residues 315–341 show a composition bias toward basic and acidic residues; it reads EQDRKEPHSSDTELPKDKLSSADDHRV.

It belongs to the heat shock protein 70 family. In terms of assembly, binds UBQLN2.

Its subcellular location is the microsome. It is found in the endoplasmic reticulum. In terms of biological role, has peptide-independent ATPase activity. In Pongo abelii (Sumatran orangutan), this protein is Heat shock 70 kDa protein 13 (HSPA13).